Consider the following 255-residue polypeptide: Acetylglutamate kinase (255 aa).

Substrate contacts are provided by residues 40–41, R62, and N153; that span reads GG.

It belongs to the acetylglutamate kinase family. ArgB subfamily.

The protein resides in the cytoplasm. It carries out the reaction N-acetyl-L-glutamate + ATP = N-acetyl-L-glutamyl 5-phosphate + ADP. It participates in amino-acid biosynthesis; L-arginine biosynthesis; N(2)-acetyl-L-ornithine from L-glutamate: step 2/4. Catalyzes the ATP-dependent phosphorylation of N-acetyl-L-glutamate. The polypeptide is Acetylglutamate kinase (Bacillus cereus (strain 03BB102)).